The primary structure comprises 522 residues: Endochitinase 11 (522 aa).

The signal sequence occupies residues 1 to 24; sequence MLFSMVMFTERWWVGSKDCPRVPA. Asn148 and Asn275 each carry an N-linked (GlcNAc...) asparagine glycan. In terms of domain architecture, GH18 spans 235 to 522; that stretch reads KHVYAPYVDF…ALTCLRNSTA (288 aa). Residue Glu346 is the Proton donor of the active site. N-linked (GlcNAc...) asparagine glycosylation is found at Asn455 and Asn519.

This sequence belongs to the glycosyl hydrolase 18 family. Chitinase class V subfamily.

It localises to the secreted. It catalyses the reaction Random endo-hydrolysis of N-acetyl-beta-D-glucosaminide (1-&gt;4)-beta-linkages in chitin and chitodextrins.. Its function is as follows. Secreted chitinase involved in the degradation of chitin, a component of the cell walls of fungi and exoskeletal elements of some animals (including worms and arthropods). Participates in the infection process and directly acts in the penetration process of the host cuticle. The chain is Endochitinase 11 (chi11) from Metarhizium anisopliae (Entomophthora anisopliae).